A 100-amino-acid polypeptide reads, in one-letter code: Integration host factor subunit alpha (100 aa).

The protein belongs to the bacterial histone-like protein family. In terms of assembly, heterodimer of an alpha and a beta chain.

In terms of biological role, this protein is one of the two subunits of integration host factor, a specific DNA-binding protein that functions in genetic recombination as well as in transcriptional and translational control. This chain is Integration host factor subunit alpha, found in Rhizorhabdus wittichii (strain DSM 6014 / CCUG 31198 / JCM 15750 / NBRC 105917 / EY 4224 / RW1) (Sphingomonas wittichii).